Reading from the N-terminus, the 298-residue chain is Bifunctional methyltransferase/endonuclease (298 aa).

The tract at residues 1–79 is probable methylated-DNA--protein-cysteine methyltransferase; the sequence is MQSIDLYSYL…SLGIDEKIRR (79 aa). Residue C56 is part of the active site. Positions 80–298 are endonuclease V; that stretch reads LRNDGIEINN…TVALRRNNII (219 aa). Mg(2+) contacts are provided by D137 and D197.

It in the N-terminal section; belongs to the MGMT family. This sequence in the C-terminal section; belongs to the endonuclease V family. Mg(2+) serves as cofactor.

It is found in the cytoplasm. The enzyme catalyses Endonucleolytic cleavage at apurinic or apyrimidinic sites to products with a 5'-phosphate.. Its function is as follows. DNA repair enzyme involved in the repair of deaminated bases. Selectively cleaves double-stranded DNA at the second phosphodiester bond 3' to a deoxyinosine leaving behind the intact lesion on the nicked DNA. This is Bifunctional methyltransferase/endonuclease from Picrophilus torridus (strain ATCC 700027 / DSM 9790 / JCM 10055 / NBRC 100828 / KAW 2/3).